Here is a 246-residue protein sequence, read N- to C-terminus: UPF0758 protein SSU98_1084 (246 aa).

The MPN domain maps to 103 to 225; sequence RILGSEKLGR…YYSFREESDV (123 aa). Residues His174, His176, and Asp187 each coordinate Zn(2+). The JAMM motif signature appears at 174–187; it reads HNHPSGSVQPSRND.

The protein belongs to the UPF0758 family.

The protein is UPF0758 protein SSU98_1084 of Streptococcus suis (strain 98HAH33).